The primary structure comprises 185 residues: NADH-quinone oxidoreductase subunit B (185 aa).

Residues cysteine 38, cysteine 39, cysteine 104, and cysteine 133 each coordinate [4Fe-4S] cluster.

Belongs to the complex I 20 kDa subunit family. NDH-1 is composed of 14 different subunits. Subunits NuoB, C, D, E, F, and G constitute the peripheral sector of the complex. [4Fe-4S] cluster is required as a cofactor.

It is found in the cell membrane. The enzyme catalyses a quinone + NADH + 5 H(+)(in) = a quinol + NAD(+) + 4 H(+)(out). NDH-1 shuttles electrons from NADH, via FMN and iron-sulfur (Fe-S) centers, to quinones in the respiratory chain. The immediate electron acceptor for the enzyme in this species is believed to be a menaquinone. Couples the redox reaction to proton translocation (for every two electrons transferred, four hydrogen ions are translocated across the cytoplasmic membrane), and thus conserves the redox energy in a proton gradient. The polypeptide is NADH-quinone oxidoreductase subunit B (Cutibacterium acnes (strain DSM 16379 / KPA171202) (Propionibacterium acnes)).